Here is a 263-residue protein sequence, read N- to C-terminus: MPVFALLALVAYSVSLALIVPGLLQKNGGWRRMAIISAVIALVCHAIALEARILPDGDSGQNLSLLNVGSLVSLMICTVMTIVASRNRGWLLLPIVYAFALINLALATFMPNEYITHLEATPGMLVHIGLSLFSYATLIIAALYALQLAWIDYQLKNKKLAFNQEMPPLMSIERKMFHITQIGVVLLTLTLCTGLFYMHNLFSMENIDKAVLSIVAWFVYIVLLWGHYHEGWRGRRVVWFNVAGAVILTLAYFGSRIVQQLIS.

Residues 1 to 3 lie on the Periplasmic side of the membrane; it reads MPV. The chain crosses the membrane as a helical span at residues 4–23; that stretch reads FALLALVAYSVSLALIVPGL. At 24 to 34 the chain is on the cytoplasmic side; it reads LQKNGGWRRMA. A helical membrane pass occupies residues 35–54; sequence IISAVIALVCHAIALEARIL. At 55-63 the chain is on the periplasmic side; sequence PDGDSGQNL. Residues 64-83 traverse the membrane as a helical segment; that stretch reads SLLNVGSLVSLMICTVMTIV. Topologically, residues 84–89 are cytoplasmic; that stretch reads ASRNRG. The chain crosses the membrane as a helical span at residues 90–109; it reads WLLLPIVYAFALINLALATF. Residues 110-123 lie on the Periplasmic side of the membrane; it reads MPNEYITHLEATPG. The chain crosses the membrane as a helical span at residues 124 to 146; that stretch reads MLVHIGLSLFSYATLIIAALYAL. At 147 to 181 the chain is on the cytoplasmic side; sequence QLAWIDYQLKNKKLAFNQEMPPLMSIERKMFHITQ. The chain crosses the membrane as a helical span at residues 182–201; sequence IGVVLLTLTLCTGLFYMHNL. Residues 202 to 210 are Periplasmic-facing; the sequence is FSMENIDKA. A helical membrane pass occupies residues 211-228; it reads VLSIVAWFVYIVLLWGHY. Over 229 to 236 the chain is Cytoplasmic; that stretch reads HEGWRGRR. The helical transmembrane segment at 237-259 threads the bilayer; that stretch reads VVWFNVAGAVILTLAYFGSRIVQ. Topologically, residues 260 to 263 are periplasmic; sequence QLIS.

Its subcellular location is the cell inner membrane. This Escherichia coli O157:H7 protein is Inner membrane protein YpjD (ypjD).